The following is a 336-amino-acid chain: DNA repair protein RAD51 homolog B (336 aa).

The HhH domain occupies 45-74 (TVEAVAYAPKKELLNIKGISEAKAEKILAE). Residue 124–131 (GEFRTGKT) coordinates ATP. Positions 242 to 257 (LARFLRMLLRLADEFG) match the Nuclear export signal motif.

It belongs to the RecA family. RAD51 subfamily. Forms linear homooligomers, giving rise to a RAD51 nucleoprotein filament, which is essential for strand-pairing reactions during DNA recombination.

It localises to the nucleus. The protein localises to the cytoplasm. Its subcellular location is the chromosome. Plays an important role in homologous strand exchange, a key step in DNA repair through homologous recombination (HR). Binds to single-stranded DNA in an ATP-dependent manner to form nucleoprotein filaments which are essential for the homology search and strand exchange. Catalyzes the recognition of homology and strand exchange between homologous DNA partners to form a joint molecule between a processed DNA break and the repair template. Recruited to resolve stalled replication forks during replication stress. Also involved in interstrand cross-link repair. This chain is DNA repair protein RAD51 homolog B (rad51-b), found in Xenopus laevis (African clawed frog).